We begin with the raw amino-acid sequence, 425 residues long: Glutamate-1-semialdehyde 2,1-aminomutase (425 aa).

N6-(pyridoxal phosphate)lysine is present on Lys265.

The protein belongs to the class-III pyridoxal-phosphate-dependent aminotransferase family. HemL subfamily. Homodimer. Pyridoxal 5'-phosphate is required as a cofactor.

The protein localises to the cytoplasm. It carries out the reaction (S)-4-amino-5-oxopentanoate = 5-aminolevulinate. It functions in the pathway porphyrin-containing compound metabolism; protoporphyrin-IX biosynthesis; 5-aminolevulinate from L-glutamyl-tRNA(Glu): step 2/2. This chain is Glutamate-1-semialdehyde 2,1-aminomutase, found in Thiobacillus denitrificans (strain ATCC 25259 / T1).